Consider the following 396-residue polypeptide: Tryptophan synthase beta chain (396 aa).

An N6-(pyridoxal phosphate)lysine modification is found at K96.

Belongs to the TrpB family. Tetramer of two alpha and two beta chains. Requires pyridoxal 5'-phosphate as cofactor.

The enzyme catalyses (1S,2R)-1-C-(indol-3-yl)glycerol 3-phosphate + L-serine = D-glyceraldehyde 3-phosphate + L-tryptophan + H2O. Its pathway is amino-acid biosynthesis; L-tryptophan biosynthesis; L-tryptophan from chorismate: step 5/5. Its function is as follows. The beta subunit is responsible for the synthesis of L-tryptophan from indole and L-serine. The sequence is that of Tryptophan synthase beta chain from Azobacteroides pseudotrichonymphae genomovar. CFP2.